Reading from the N-terminus, the 469-residue chain is Biotin synthase (469 aa).

In terms of domain architecture, Radical SAM core spans 51 to 278; sequence MTVKVNYLVN…DKEIRMAGGR (228 aa). The [4Fe-4S] cluster site is built by Cys66, Cys70, and Cys73. Residues Cys110, Cys143, Cys203, and Arg273 each contribute to the [2Fe-2S] cluster site. The segment at 326–469 is disordered; sequence AGPDPSRDRH…GAGTSVAPNA (144 aa). Low complexity-rich tracts occupy residues 363-384 and 405-428; these read GSAA…APAD and AGGP…MSPA.

This sequence belongs to the radical SAM superfamily. Biotin synthase family. Homodimer. It depends on [4Fe-4S] cluster as a cofactor. Requires [2Fe-2S] cluster as cofactor.

It carries out the reaction (4R,5S)-dethiobiotin + (sulfur carrier)-SH + 2 reduced [2Fe-2S]-[ferredoxin] + 2 S-adenosyl-L-methionine = (sulfur carrier)-H + biotin + 2 5'-deoxyadenosine + 2 L-methionine + 2 oxidized [2Fe-2S]-[ferredoxin]. Its pathway is cofactor biosynthesis; biotin biosynthesis; biotin from 7,8-diaminononanoate: step 2/2. Functionally, catalyzes the conversion of dethiobiotin (DTB) to biotin by the insertion of a sulfur atom into dethiobiotin via a radical-based mechanism. This chain is Biotin synthase, found in Kocuria rhizophila (strain ATCC 9341 / DSM 348 / NBRC 103217 / DC2201).